A 1958-amino-acid chain; its full sequence is MASTSSGGRGEDGRPPQMQPVRSMSRKMTRAGTMMIEHPNEDERPIDSELVPSSLASIAPILRVANDIDQDNARVAYLCRFHAFEKAHRMDPTSSGRGVRQFKTYLLHKLEEEEEITEHMLAKSDPREIQLYYQTFYENNIQDGEGKKTPEEMAKLYQIATVLYDVLKTVVPQARIDDKTLRYAKEVERKKEQYEHYNILPLYALGAKTAVMELPEIKAAILAVCNVDNLPRPRFHSASANLDEVDRERGRSFNDILEWLALVFGFQRGNVANQREHLILLLANIDVRKRDLENYVEIKPSTVRKLMEKYFKNYNSWCKYLRCDSYLRFPAGCDKQQLSLLYIGLYLLIWGEASNVRFMPECLCYIFHNMANEVHGILFGNVYPVTGDTYEAGAPDEEAFLRNVITPIYQVLRKEVRRNKNGKASHSKWRNYDDLNEYFWDKRCFRLKWPMNFKADFFIHTDEISQVPNQRHDQVSHGKRKPKTNFVEARTFWNLYRSFDRMWMFLVLSLQTMIIVAWHPSGSILAIFTEDVFRNVLTIFITSAFLNLLQATLDLVLSFGAWKSLKFSQIMRYITKFLMAAMWAIMLPITYSKSVQNPTGLIKFFSSWVGSWLHRSLYDYAIALYVLPNILAAVFFLLPPLRRIMERSNMRIVTLIMWWAQPKLYIGRGMHEEMFALFKYTFFWVMLLLSKLAFSYYVEILPLVNPTKLIWDMHVVNYEWHEFFPNATHNIGVIIAIWGPIVLVYFMDTQIWYAIFSTLFGGIYGAFSHLGEIRTLGMLRSRFKVVPSAFCSKLTPLPLGHAKRKHLDETVDEKDIARFSQMWNKFIHTMRDEDLISDRERDLLLVPSSSGDVTVVQWPPFLLASKIPIALDMAKDFKGKEDVDLFKKIKSEYYMHYAVVEAYETVRDIIYGLLQDESDKRIVREICYEVDISIQQHRFLSEFRMTGMPLLSDKLEKFLKILLSDYEEDDYKSQIINVLQDIIEIITQDVMVNGHEILERAHLQSGDIESDKKEQRFEKIDLSLTQNISWREKVVRLLLLLTVKESAINIPQSLEARRRMTFFANSLFMNMPDAPRVRDMLSFSVLTPYYKEDVLYSEEELNKENEDGITILFYLQRIYPEEWSNYCERVNDLKRNLSEKDKAEQLRQWVSYRGQTLSRTVRGMMYYRVALELQCFQEYTEENATNGGYLPSESNEDDRKAFSDRARALADLKFTYVVSCQVYGNQKKSSESRDRSCYNNILQLMLKYPSLRVAYIDEREETVNGKSQKVFYSVLLKGCDKLDEEIYRIKLPGPPTEIGEGKPENQNHAIIFTRGEALQTIDMNQDNYFEECFKMRNVLQEFDEGRRGKRNPTILGLREHIFTGSVSSLAWFMSNQETSFVTIGQRVLANPLRVRFHYGHPDIFDRIFHITRGGISKASKIINLSEDIFAGYNSTLRGGYVTHHEYIQAGKGRDVGMNQISFFEAKVANGNGEQTLSRDVYRLGRRFDFYRMLSFYFTTVGFYFSSMITVLTVYVFLYGRLYLVLSGLEKNILQSASVHESNALEQALAAQSVFQLGFLMVLPMVMEIGLEKGFRTALGDFIIMQLQLASVFFTFQLGTKAHYFGRTILHGGSKYRATGRGFVVFHAKFAENYRLYSRSHFVKGLELVILLVVYQVYGTSYRSSSTYMYITFSMWFLVTSWLFAPFIFNPSGFEWQKTVDDWTDWKRWMGNRGGIGIVLDKSWESWWDIEQEHLKHTNLRGRVLEILLALRFLLYQYGIVYHLNIARRHTTFLVYGLSWAILLSVLLVLKMVSMGRRKFGTDFQVMFRILKALLFLGFLSVMTVLFVVCGLTISDLFASILAFLPTGWAILLIGQALRSVFKGLGFWDSVKELGRAYEYIMGLVIFTPIAVLSWFPFVSEFQTRLLFNQAFSRGLQISMILAGKKDKETPSTKYLGHTEESFGLEHDTNTFNHYYLWT.

Positions 1–29 are disordered; the sequence is MASTSSGGRGEDGRPPQMQPVRSMSRKMT. Topologically, residues 1-504 are cytoplasmic; the sequence is MASTSSGGRG…LYRSFDRMWM (504 aa). The chain crosses the membrane as a helical span at residues 505–525; sequence FLVLSLQTMIIVAWHPSGSIL. The Extracellular portion of the chain corresponds to 526–535; it reads AIFTEDVFRN. Residues 536–556 form a helical membrane-spanning segment; it reads VLTIFITSAFLNLLQATLDLV. The Cytoplasmic segment spans residues 557–569; the sequence is LSFGAWKSLKFSQ. A helical membrane pass occupies residues 570–590; it reads IMRYITKFLMAAMWAIMLPIT. The Extracellular segment spans residues 591-620; sequence YSKSVQNPTGLIKFFSSWVGSWLHRSLYDY. Residues 621–641 form a helical membrane-spanning segment; the sequence is AIALYVLPNILAAVFFLLPPL. Residues 642–673 lie on the Cytoplasmic side of the membrane; sequence RRIMERSNMRIVTLIMWWAQPKLYIGRGMHEE. Residues 674 to 694 form a helical membrane-spanning segment; sequence MFALFKYTFFWVMLLLSKLAF. Residues 695–730 lie on the Extracellular side of the membrane; the sequence is SYYVEILPLVNPTKLIWDMHVVNYEWHEFFPNATHN. A helical membrane pass occupies residues 731-751; sequence IGVIIAIWGPIVLVYFMDTQI. At 752-1496 the chain is on the cytoplasmic side; it reads WYAIFSTLFG…FDFYRMLSFY (745 aa). Residues 1497–1517 form a helical membrane-spanning segment; it reads FTTVGFYFSSMITVLTVYVFL. Topologically, residues 1518–1547 are extracellular; that stretch reads YGRLYLVLSGLEKNILQSASVHESNALEQA. A helical transmembrane segment spans residues 1548 to 1568; that stretch reads LAAQSVFQLGFLMVLPMVMEI. The Cytoplasmic portion of the chain corresponds to 1569 to 1576; it reads GLEKGFRT. A helical membrane pass occupies residues 1577–1597; that stretch reads ALGDFIIMQLQLASVFFTFQL. At 1598–1640 the chain is on the extracellular side; it reads GTKAHYFGRTILHGGSKYRATGRGFVVFHAKFAENYRLYSRSH. The chain crosses the membrane as a helical span at residues 1641–1661; it reads FVKGLELVILLVVYQVYGTSY. The Cytoplasmic segment spans residues 1662–1667; sequence RSSSTY. Residues 1668–1688 traverse the membrane as a helical segment; it reads MYITFSMWFLVTSWLFAPFIF. Residues 1689 to 1742 lie on the Extracellular side of the membrane; that stretch reads NPSGFEWQKTVDDWTDWKRWMGNRGGIGIVLDKSWESWWDIEQEHLKHTNLRGR. The helical transmembrane segment at 1743 to 1763 threads the bilayer; that stretch reads VLEILLALRFLLYQYGIVYHL. At 1764–1771 the chain is on the cytoplasmic side; the sequence is NIARRHTT. Residues 1772–1792 traverse the membrane as a helical segment; that stretch reads FLVYGLSWAILLSVLLVLKMV. Residues 1793–1812 are Extracellular-facing; the sequence is SMGRRKFGTDFQVMFRILKA. A helical membrane pass occupies residues 1813–1833; that stretch reads LLFLGFLSVMTVLFVVCGLTI. At 1834-1835 the chain is on the cytoplasmic side; it reads SD. Residues 1836–1856 form a helical membrane-spanning segment; that stretch reads LFASILAFLPTGWAILLIGQA. The Extracellular portion of the chain corresponds to 1857–1878; it reads LRSVFKGLGFWDSVKELGRAYE. A helical membrane pass occupies residues 1879 to 1899; the sequence is YIMGLVIFTPIAVLSWFPFVS. Topologically, residues 1900–1958 are cytoplasmic; the sequence is EFQTRLLFNQAFSRGLQISMILAGKKDKETPSTKYLGHTEESFGLEHDTNTFNHYYLWT.

Belongs to the glycosyltransferase 48 family.

It is found in the cell membrane. The catalysed reaction is [(1-&gt;3)-beta-D-glucosyl](n) + UDP-alpha-D-glucose = [(1-&gt;3)-beta-D-glucosyl](n+1) + UDP + H(+). Involved in callose synthesis at the forming cell plate during cytokinesis. During plant growth and development, callose is found as a transitory component of the cell plate in dividing cells, is a major component of pollen mother cell walls and pollen tubes, and is found as a structural component of plasmodesmatal canals. This is Callose synthase 7 (CALS7) from Arabidopsis thaliana (Mouse-ear cress).